The sequence spans 145 residues: Cytochrome c550 (145 aa).

An N-terminal signal peptide occupies residues 1-24 (MNKNNVLRGLLVLAGLSLSSLALA). The Cytochrome c domain maps to 60-142 (LAVEIGASAY…AIRSYLESVH (83 aa)). Positions 73, 76, 77, and 119 each coordinate heme c.

Monomer. Interacts with the quinoprotein ethanol dehydrogenase (QEDH) ExaA. In terms of processing, binds 1 heme group per subunit.

The protein resides in the periplasm. It functions in the pathway alcohol metabolism; ethanol degradation; acetate from ethanol. Its function is as follows. Is an essential component of the ethanol oxidation system that allows P.aeruginosa to grow on ethanol as the sole carbon and energy source. Is the direct electron acceptor of the quinoprotein ethanol dehydrogenase (QEDH). The polypeptide is Cytochrome c550 (Pseudomonas aeruginosa (strain ATCC 15692 / DSM 22644 / CIP 104116 / JCM 14847 / LMG 12228 / 1C / PRS 101 / PAO1)).